The chain runs to 29 residues: Cytochrome b6-f complex subunit 8 (29 aa).

A helical transmembrane segment spans residues 3–23; it reads IVGIAWAALMVVFTFSLSLVV.

The protein belongs to the PetN family. The 4 large subunits of the cytochrome b6-f complex are cytochrome b6, subunit IV (17 kDa polypeptide, PetD), cytochrome f and the Rieske protein, while the 4 small subunits are PetG, PetL, PetM and PetN. The complex functions as a dimer.

Its subcellular location is the plastid. The protein localises to the chloroplast thylakoid membrane. Its function is as follows. Component of the cytochrome b6-f complex, which mediates electron transfer between photosystem II (PSII) and photosystem I (PSI), cyclic electron flow around PSI, and state transitions. The polypeptide is Cytochrome b6-f complex subunit 8 (Cryptomeria japonica (Japanese cedar)).